The sequence spans 205 residues: Protein MIS12 homolog (205 aa).

A coiled-coil region spans residues 108–205; sequence PYSEEDFQHL…EKESKRLKIS (98 aa).

It belongs to the mis12 family. Component of the MIS12 complex composed of MIS12, DSN1, NSL1 and PMF1. Also interacts with KNL1, CBX3, CBX5, NDC80 and ZWINT.

Its subcellular location is the chromosome. The protein resides in the centromere. It is found in the kinetochore. Its function is as follows. Part of the MIS12 complex which is required for normal chromosome alignment and segregation and for kinetochore formation during mitosis. Essential for proper kinetochore microtubule attachments. This is Protein MIS12 homolog from Homo sapiens (Human).